The chain runs to 722 residues: Zinc finger BED domain-containing protein RICESLEEPER 2 (722 aa).

The BED-type zinc-finger motif lies at arginine 66–alanine 134. Zn(2+) is bound by residues cysteine 89, cysteine 92, histidine 113, and histidine 127. The disordered stretch occupies residues valine 572–proline 592. Residues aspartate 576 to proline 592 are compositionally biased toward polar residues. Positions glutamate 617–leucine 702 are HATC (Hobo-Ac-Tam3) domain.

Homodimer.

The protein localises to the nucleus. Transposase-like protein that is essential for plant growth and development. May regulate global gene expression by recruiting other cellular factors. The chain is Zinc finger BED domain-containing protein RICESLEEPER 2 from Oryza sativa subsp. japonica (Rice).